A 128-amino-acid chain; its full sequence is uncharacterized protein (128 aa).

Disordered regions lie at residues 62-83 (LNPS…SPRV) and 101-128 (FAAS…RYQP). Low complexity predominate over residues 101 to 114 (FAASSSSTAPVTVT).

The protein resides in the cytoplasm. Its subcellular location is the nucleus. This is an uncharacterized protein from Saccharomyces cerevisiae (strain ATCC 204508 / S288c) (Baker's yeast).